The primary structure comprises 232 residues: Ferric nitrobindin-like protein (232 aa).

Residues 1–10 are compositionally biased toward polar residues; that stretch reads MSENETSKTG. Positions 1–33 are disordered; that stretch reads MSENETSKTGGNAGVPGSGADAPSLSDSPAISG. Positions 85 to 91 match the GXWXGXG motif; that stretch reads GVWRGEG.

It belongs to the nitrobindin family.

This is Ferric nitrobindin-like protein from Corynebacterium efficiens (strain DSM 44549 / YS-314 / AJ 12310 / JCM 11189 / NBRC 100395).